The chain runs to 602 residues: Elongation factor 4 (602 aa).

In terms of domain architecture, tr-type G spans Lys-7–Gln-189. GTP-binding positions include Asp-19–Thr-24 and Asn-136–Asp-139.

Belongs to the TRAFAC class translation factor GTPase superfamily. Classic translation factor GTPase family. LepA subfamily.

Its subcellular location is the cell membrane. The catalysed reaction is GTP + H2O = GDP + phosphate + H(+). Required for accurate and efficient protein synthesis under certain stress conditions. May act as a fidelity factor of the translation reaction, by catalyzing a one-codon backward translocation of tRNAs on improperly translocated ribosomes. Back-translocation proceeds from a post-translocation (POST) complex to a pre-translocation (PRE) complex, thus giving elongation factor G a second chance to translocate the tRNAs correctly. Binds to ribosomes in a GTP-dependent manner. The protein is Elongation factor 4 of Clostridium kluyveri (strain ATCC 8527 / DSM 555 / NBRC 12016 / NCIMB 10680 / K1).